We begin with the raw amino-acid sequence, 360 residues long: 3-dehydroquinate synthase (360 aa).

Residues Asp70 to Lys75, Thr128 to Thr129, Lys141, and Lys150 each bind NAD(+). Glu182, His243, and His259 together coordinate Zn(2+).

This sequence belongs to the sugar phosphate cyclases superfamily. Dehydroquinate synthase family. The cofactor is NAD(+). Requires Co(2+) as cofactor. It depends on Zn(2+) as a cofactor.

The protein resides in the cytoplasm. The enzyme catalyses 7-phospho-2-dehydro-3-deoxy-D-arabino-heptonate = 3-dehydroquinate + phosphate. The protein operates within metabolic intermediate biosynthesis; chorismate biosynthesis; chorismate from D-erythrose 4-phosphate and phosphoenolpyruvate: step 2/7. Catalyzes the conversion of 3-deoxy-D-arabino-heptulosonate 7-phosphate (DAHP) to dehydroquinate (DHQ). This is 3-dehydroquinate synthase from Thermoplasma volcanium (strain ATCC 51530 / DSM 4299 / JCM 9571 / NBRC 15438 / GSS1).